The primary structure comprises 62 residues: uncharacterized protein (62 aa).

Polar residues predominate over residues 1 to 13; sequence MGESKSPQESSSE. The segment at 1 to 62 is disordered; that stretch reads MGESKSPQES…SRREFRRKSG (62 aa). Over residues 14–28 the composition is skewed to basic and acidic residues; sequence GETKRKFREALDRKM.

This is an uncharacterized protein from Mycobacterium tuberculosis (strain ATCC 25618 / H37Rv).